A 142-amino-acid chain; its full sequence is C-type lectin 13 (142 aa).

The signal sequence occupies residues 1–23; sequence MGRLVFVSFGGWDVFLSLSGTGA. Intrachain disulfides connect Cys25/Cys36, Cys53/Cys138, and Cys115/Cys130. Positions 32–139 constitute a C-type lectin domain; it reads YEGHCYRVFQ…CSKTHNVVCK (108 aa).

It belongs to the snaclec family. In terms of assembly, heteromultimer; disulfide-linked. Expressed by the venom gland.

It localises to the secreted. Its function is as follows. Interferes with one step of hemostasis (modulation of platelet aggregation, or coagulation cascade, for example). This is C-type lectin 13 from Crotalus adamanteus (Eastern diamondback rattlesnake).